The chain runs to 241 residues: Superantigen-like protein 13 (241 aa).

The N-terminal stretch at 1 to 26 is a signal peptide; sequence MNNNITKKIILSTTLLLLGTASTQFP.

Belongs to the staphylococcal/streptococcal toxin family. Interacts with host FPR2; this interaction promotes neutrophil chemotaxis.

In terms of biological role, acts as a pathogen alarming molecule by acting on host neutrophil chemotactic factors FPR2. Plays a role of chemoattractant and induces degranulation and oxidative burst in neutrophils. In Staphylococcus aureus (strain Newman), this protein is Superantigen-like protein 13.